A 184-amino-acid polypeptide reads, in one-letter code: Tyrosine-protein kinase receptor Tie-1 (184 aa).

One can recognise a Protein kinase domain in the interval 1 to 164 (QLLQFAADVA…RMQEARKAYV (164 aa)). The active-site Proton acceptor is Asp25. The residue at position 53 (Tyr53) is a Phosphotyrosine; by autocatalysis.

It belongs to the protein kinase superfamily. Tyr protein kinase family. Tie subfamily. As to quaternary structure, interacts with svep1. As to expression, expressed in most populations of endothelial cells in 24 hours embryos, including the endocardium.

It localises to the cell membrane. The enzyme catalyses L-tyrosyl-[protein] + ATP = O-phospho-L-tyrosyl-[protein] + ADP + H(+). In terms of biological role, transmembrane tyrosine-protein kinase. Required for the formation of facial lymphatic structures and brain lymphatic endothelial cells. Also required for embryonic ventral and dorsal migration of parachordal lymphoblasts along the arterial intersegmental vessel. Plays a role in the embryonic formation of the dorsal longitudinal anastomotic vessel. This is Tyrosine-protein kinase receptor Tie-1 (tie1) from Danio rerio (Zebrafish).